The primary structure comprises 315 residues: Olfactory receptor 5M10 (315 aa).

Topologically, residues 1–25 (MLSPNHTIVTEFILLGLTDDPVLEK) are extracellular. N-linked (GlcNAc...) asparagine glycosylation is present at N5. The helical transmembrane segment at 26–46 (ILFGVFLAIYLITLAGNLCMI) threads the bilayer. Residues 47-54 (LLIRTNSQ) are Cytoplasmic-facing. Residues 55 to 75 (LQTPMYFFLGHLSFVDICYSS) form a helical membrane-spanning segment. Over 76-99 (NVTPNMLHNFLSEQKTISYAGCFT) the chain is Extracellular. A disulfide bridge links C97 with C189. A helical membrane pass occupies residues 100-120 (QCLLFIALVITEFYFLASMAL). At 121-139 (DRYVAICSPLHYSSRMSKN) the chain is on the cytoplasmic side. The chain crosses the membrane as a helical span at residues 140-160 (ICISLVTVPYMYGFLNGLSQT). At 161–196 (LLTFHLSFCGSLEINHFYCADPPLIMLACSDTRVKK) the chain is on the extracellular side. The helical transmembrane segment at 197–217 (MAMFVVAGFTLSSSLFIILLS) threads the bilayer. At 218 to 237 (YLFIFAAIFRIRSAEGRHKA) the chain is on the cytoplasmic side. Residues 238–258 (FSTCASHLTIVTLFYGTLFCM) form a helical membrane-spanning segment. The Extracellular portion of the chain corresponds to 259–271 (YVRPPSEKSVEES). A helical membrane pass occupies residues 272 to 292 (KIIAVFYTFLSPMLNPLIYSL). Residues 293-315 (RNRDVILAIQQMIRGKSFCKIAV) lie on the Cytoplasmic side of the membrane.

This sequence belongs to the G-protein coupled receptor 1 family.

The protein resides in the cell membrane. Odorant receptor. This chain is Olfactory receptor 5M10 (OR5M10), found in Homo sapiens (Human).